Here is a 209-residue protein sequence, read N- to C-terminus: Glutathione S-transferase 1, isoform C (209 aa).

Residues M1 to D80 form the GST N-terminal domain. Glutathione contacts are provided by residues S9, H50–I52, and E64–R66. One can recognise a GST C-terminal domain in the interval D86 to F207.

This sequence belongs to the GST superfamily. Theta family. Homodimer.

It carries out the reaction RX + glutathione = an S-substituted glutathione + a halide anion + H(+). The enzyme catalyses 1,1,1-trichloro-2,2-bis(4-chlorophenyl)ethane = 1,1-dichloro-2,2-bis(4-chlorophenyl)ethylene + chloride + H(+). Functionally, conjugation of reduced glutathione to a wide number of exogenous and endogenous hydrophobic electrophiles. Has DDT dehydrochlorinase activity. The sequence is that of Glutathione S-transferase 1, isoform C (GstD1) from Anopheles gambiae (African malaria mosquito).